A 154-amino-acid chain; its full sequence is Putative pre-16S rRNA nuclease (154 aa).

This sequence belongs to the YqgF nuclease family.

The protein localises to the cytoplasm. Could be a nuclease involved in processing of the 5'-end of pre-16S rRNA. This Gluconacetobacter diazotrophicus (strain ATCC 49037 / DSM 5601 / CCUG 37298 / CIP 103539 / LMG 7603 / PAl5) protein is Putative pre-16S rRNA nuclease.